We begin with the raw amino-acid sequence, 240 residues long: Sugar fermentation stimulation protein homolog (240 aa).

It belongs to the SfsA family.

In Saccharolobus solfataricus (strain ATCC 35092 / DSM 1617 / JCM 11322 / P2) (Sulfolobus solfataricus), this protein is Sugar fermentation stimulation protein homolog.